A 1190-amino-acid chain; its full sequence is Tight junction protein 2 (1190 aa).

The residue at position 16 (serine 16) is a Phosphoserine. In terms of domain architecture, PDZ 1 spans 33-120 (TVTLQKDSKR…VAAIVVKRPR (88 aa)). Serine 130, serine 150, serine 153, serine 163, serine 168, serine 170, serine 174, serine 200, serine 220, serine 232, serine 244, serine 266, serine 325, serine 398, serine 400, serine 406, serine 415, serine 424, serine 430, and serine 431 each carry phosphoserine. Positions 152–306 (RSGYSERSRL…PEPRGRPGPI (155 aa)) are disordered. The span at 169–291 (RSWEDSPERG…PRSRSREHPH (123 aa)) shows a compositional bias: basic and acidic residues. The PDZ 2 domain occupies 307-385 (GVLLMKSRAN…KLQLVVLRDS (79 aa)). A disordered region spans residues 408–506 (IESNRSFSPE…RPSPEDEAIY (99 aa)). Residues 415–446 (SPEERRHQYSDYDYHSSSEKLKERPSSREDTP) show a composition bias toward basic and acidic residues. Threonine 455 is subject to Phosphothreonine. Serine 499 carries the phosphoserine modification. The PDZ 3 domain occupies 509–590 (NTKMVRFKKG…GEMVTILAQS (82 aa)). Phosphotyrosine is present on tyrosine 574. In terms of domain architecture, SH3 spans 604 to 669 (GDSFFIRSHF…PNKSRAEQMA (66 aa)). One can recognise a Guanylate kinase-like domain in the interval 678–876 (NAGDRADFWR…WFGSLKDTIQ (199 aa)). A phosphoserine mark is found at serine 702 and serine 902. Position 905 is a phosphothreonine (threonine 905). Phosphoserine occurs at positions 913 and 920. Disordered regions lie at residues 920–1079 (SDFE…KSVL) and 1105–1190 (NARI…DTEL). Phosphothreonine occurs at positions 925 and 933. Residues 956-967 (VQHEESIRKPSP) are compositionally biased toward basic and acidic residues. A phosphoserine mark is found at serine 966, serine 978, serine 986, serine 1006, serine 1067, and serine 1068. Residues 994–1014 (EPPKAKTQNKEESYDFSKSYE) are compositionally biased toward basic and acidic residues. The span at 1060-1072 (EGEEVGESSEEQD) shows a compositional bias: acidic residues. Tyrosine 1118 carries the post-translational modification Phosphotyrosine. The residue at position 1131 (threonine 1131) is a Phosphothreonine. Phosphoserine occurs at positions 1147 and 1159. The segment covering 1166-1175 (YRQQLSEHSK) has biased composition (basic and acidic residues). Positions 1188–1190 (TEL) are interaction with SCRIB.

The protein belongs to the MAGUK family. In terms of assembly, homodimer. Interacts (via PDZ2 domain) with TJP1/ZO1 (via PDZ2 domain). Interacts with OCLN. Interacts with UBN1. Interacts with SAFB in the nucleus. Interacts with SCRIB. Interacts with USP53 (via the C-terminal region). Interacts with claudins, including CLDN1, CLDN2, CLDN3, CLDN5 and CLDN7. Interacts with CLDN18. Interacts (via N-terminus) with CTNNA1. This protein is found in epithelial cell junctions. Isoform A1 is abundant in the heart and brain. Detected in brain and skeletal muscle. It is present almost exclusively in normal tissues. Isoform C1 is expressed at high level in the kidney, pancreas, heart and placenta. Not detected in brain and skeletal muscle. Found in normal as well as in most neoplastic tissues.

It is found in the cell junction. It localises to the adherens junction. The protein resides in the cell membrane. Its subcellular location is the tight junction. The protein localises to the nucleus. Functionally, plays a role in tight junctions and adherens junctions. Acts as a positive regulator of RANKL-induced osteoclast differentiation, potentially via mediating downstream transcriptional activity. The sequence is that of Tight junction protein 2 from Homo sapiens (Human).